The chain runs to 473 residues: Putative sulfoquinovose importer (473 aa).

11 helical membrane-spanning segments follow: residues 18–38 (AYGVGDFGSNLMLCIGTLYLL), 45–65 (LGMPAYYGGIIFLVAKFFTAF), 88–108 (PFILYASFPVALVATAQFFAT), 110–130 (FTLPVKTAFATVLFMLFGLFY), 160–180 (GGATIGLLLCTVGFMPIQALF), 187–207 (GYLIAAVIFSVCGLFSMWWCF), 239–259 (LLVLCVANLCTLAAFNIKLAI), 276–296 (WMGFFSMGCILIGVLLVPAAV), 317–337 (ILNFIWGGTSFLFVIFSCIAF), 380–400 (ISAALAGFLPGIMLTQIGYIP), and 415–435 (LIFLWPCGLAIIAALTMGFFY).

It belongs to the sodium:galactoside symporter (TC 2.A.2) family.

The protein resides in the cell inner membrane. In terms of biological role, could be involved in sulfoquinovose import. This chain is Putative sulfoquinovose importer (yihO), found in Salmonella typhimurium (strain LT2 / SGSC1412 / ATCC 700720).